The chain runs to 342 residues: tRNA N6-adenosine threonylcarbamoyltransferase (342 aa).

Fe cation contacts are provided by histidine 115 and histidine 119. Residues 137-141 (IVSGG), aspartate 170, glycine 183, aspartate 187, and asparagine 276 contribute to the substrate site. Aspartate 304 lines the Fe cation pocket.

Belongs to the KAE1 / TsaD family. Fe(2+) is required as a cofactor.

The protein localises to the cytoplasm. It catalyses the reaction L-threonylcarbamoyladenylate + adenosine(37) in tRNA = N(6)-L-threonylcarbamoyladenosine(37) in tRNA + AMP + H(+). Functionally, required for the formation of a threonylcarbamoyl group on adenosine at position 37 (t(6)A37) in tRNAs that read codons beginning with adenine. Is involved in the transfer of the threonylcarbamoyl moiety of threonylcarbamoyl-AMP (TC-AMP) to the N6 group of A37, together with TsaE and TsaB. TsaD likely plays a direct catalytic role in this reaction. The polypeptide is tRNA N6-adenosine threonylcarbamoyltransferase (Staphylococcus saprophyticus subsp. saprophyticus (strain ATCC 15305 / DSM 20229 / NCIMB 8711 / NCTC 7292 / S-41)).